A 103-amino-acid chain; its full sequence is UPF0058 protein MJ1205 (103 aa).

The protein belongs to the UPF0058 family.

The polypeptide is UPF0058 protein MJ1205 (Methanocaldococcus jannaschii (strain ATCC 43067 / DSM 2661 / JAL-1 / JCM 10045 / NBRC 100440) (Methanococcus jannaschii)).